The sequence spans 527 residues: Zinc finger CCCH-type with G patch domain-containing protein (527 aa).

A disordered region spans residues 97 to 126 (GEVSGSSSDMREREDEREEEDDGEVEGEVD). Residues 111 to 125 (DEREEEDDGEVEGEV) are compositionally biased toward acidic residues. The segment at 173–200 (QKSMKPCPFFLEDKCRFADNCRFSHGEV) adopts a C3H1-type zinc-finger fold. Positions 268–312 (LREDDLPSCSDSEDDDNGEGEAAFPRVLTQEEDWAPSRSSSAFGG) are disordered. Residues 317–363 (TRGIGSKLMLKMGYEYGKGLGKTSEGRVEPVLAVVLPKGKSLDQCAE) form the G-patch domain. Disordered stretches follow at residues 369–396 (TQRK…AHNT), 410–444 (LGNG…YKGG), and 505–527 (KAQE…MTEF). Positions 384 to 393 (RNKRTRKARA) are enriched in basic residues. Over residues 511–527 (AQRENRKADTHKKMTEF) the composition is skewed to basic and acidic residues.

The protein resides in the nucleus. Transcription repressor that specifically binds the 5'-GGAG[GA]A[GA]A-3' consensus sequence. Represses transcription by recruiting the chromatin multiprotein complex NuRD to target promoters. Negatively regulates expression of EGFR, a gene involved in cell proliferation, survival and migration. The protein is Zinc finger CCCH-type with G patch domain-containing protein (zgpat) of Salmo salar (Atlantic salmon).